The primary structure comprises 95 residues: uncharacterized protein (95 aa).

This sequence belongs to the asfivirus DP96R family.

This is an uncharacterized protein from African swine fever virus (isolate Warthog/Namibia/Wart80/1980) (ASFV).